A 144-amino-acid polypeptide reads, in one-letter code: Large ribosomal subunit protein uL15 (144 aa).

Residues 1–48 form a disordered region; that stretch reads MQLNNLKPADGSKHAKRRVGRGIGSGLGKTAGRGHKGQKSRSGGFHKV. The span at 21–31 shows a compositional bias: gly residues; sequence RGIGSGLGKTA.

This sequence belongs to the universal ribosomal protein uL15 family. Part of the 50S ribosomal subunit.

Binds to the 23S rRNA. In Cupriavidus metallidurans (strain ATCC 43123 / DSM 2839 / NBRC 102507 / CH34) (Ralstonia metallidurans), this protein is Large ribosomal subunit protein uL15.